The following is a 194-amino-acid chain: Inosine triphosphate pyrophosphatase (194 aa).

8-13 (TGNANK) lines the ITP pocket. Glu47 provides a ligand contact to Mg(2+). ITP is bound by residues Lys59, 75–76 (DT), Lys92, 151–154 (FGWD), Lys174, and 179–180 (HR).

The protein belongs to the HAM1 NTPase family. As to quaternary structure, homodimer. Mg(2+) serves as cofactor. Requires Mn(2+) as cofactor.

It is found in the cytoplasm. It localises to the nucleus. It catalyses the reaction ITP + H2O = IMP + diphosphate + H(+). The enzyme catalyses dITP + H2O = dIMP + diphosphate + H(+). The catalysed reaction is XTP + H2O = XMP + diphosphate + H(+). Functionally, pyrophosphatase that hydrolyzes non-canonical purine nucleotides such as inosine triphosphate (ITP), deoxyinosine triphosphate (dITP) or xanthosine 5'-triphosphate (XTP) to their respective monophosphate derivatives. The enzyme does not distinguish between the deoxy- and ribose forms. Probably excludes non-canonical purines from RNA and DNA precursor pools, thus preventing their incorporation into RNA and DNA and avoiding chromosomal lesions. This Scheffersomyces stipitis (strain ATCC 58785 / CBS 6054 / NBRC 10063 / NRRL Y-11545) (Yeast) protein is Inosine triphosphate pyrophosphatase.